Here is a 124-residue protein sequence, read N- to C-terminus: Putative B3 domain-containing protein At1g51970 (124 aa).

The TF-B3 DNA-binding region spans 18-124 (VLKKNLTESD…SRRFLFHHIN (107 aa)).

It localises to the nucleus. This is Putative B3 domain-containing protein At1g51970 from Arabidopsis thaliana (Mouse-ear cress).